A 104-amino-acid polypeptide reads, in one-letter code: Large ribosomal subunit protein uL24 (104 aa).

It belongs to the universal ribosomal protein uL24 family. In terms of assembly, part of the 50S ribosomal subunit.

Functionally, one of two assembly initiator proteins, it binds directly to the 5'-end of the 23S rRNA, where it nucleates assembly of the 50S subunit. One of the proteins that surrounds the polypeptide exit tunnel on the outside of the subunit. This Rhodopseudomonas palustris (strain BisB5) protein is Large ribosomal subunit protein uL24.